The sequence spans 437 residues: MRSIIIASNSSGGGKTTVTLGLMKALVSRGLEVQGFKVGPDYIDTAFHESVTGKLSRNLDLFLMGEDGVKASFARGNGDYGIIEGVMGLYDGRGVTSEYSTAHLSKILKLPIVLVLTPKAQSLTLCAEIEGIVNFDSDINIVGVILNNISEGYYNLLRIAIEEHFKGKIKVFGYLPKNEALSLKSRHLGLVQSVEINTLNEKLEKCSELLENHVKVDELLKYFSKTSDFKDDYHLKNKNLKIAVAKDEAFNFYYKENLELLHELGEVTYFSPLKDKKLPENIDFLYIGGGYPEIFKDALSENKDMLLEIKNKLEDGTRCYAECGGLMYLMEAIEGSSMVGFFKGSSYMGKRLQNFGYAEVTVSKENRLLPLNIKINCHEFHKSYVNTEEETIYSVTKYTYLGENKSWRCGYTKKNVLAAYAHVHFFGNLDFLKHLVR.

In terms of domain architecture, GATase cobBQ-type spans 241–430 (KIAVAKDEAF…AHVHFFGNLD (190 aa)). The active-site Nucleophile is C323.

Belongs to the CobB/CbiA family. It depends on Mg(2+) as a cofactor.

It catalyses the reaction cob(II)yrinate + 2 L-glutamine + 2 ATP + 2 H2O = cob(II)yrinate a,c diamide + 2 L-glutamate + 2 ADP + 2 phosphate + 2 H(+). It participates in cofactor biosynthesis; adenosylcobalamin biosynthesis; cob(II)yrinate a,c-diamide from sirohydrochlorin (anaerobic route): step 10/10. Catalyzes the ATP-dependent amidation of the two carboxylate groups at positions a and c of cobyrinate, using either L-glutamine or ammonia as the nitrogen source. This is Cobyrinate a,c-diamide synthase from Clostridium acetobutylicum (strain ATCC 824 / DSM 792 / JCM 1419 / IAM 19013 / LMG 5710 / NBRC 13948 / NRRL B-527 / VKM B-1787 / 2291 / W).